The following is a 315-amino-acid chain: uncharacterized protein (315 aa).

This is an uncharacterized protein from Homo sapiens (Human).